The chain runs to 145 residues: Extracellular globin-2 (145 aa).

The Globin domain maps to Q3 to H145. C4 and C133 are joined by a disulfide. H96 contacts heme b.

Belongs to the globin family. As to quaternary structure, the extracellular hemoglobin of the earthworm consists of 12 subunits that have a hexagonal bilayer structure with a molecular weight near 3.8 million. Each one-twelfth subunit is composed primarily of disulfide linked trimers (chains A, B, and C) and monomers (chain D).

The sequence is that of Extracellular globin-2 from Lumbricus terrestris (Common earthworm).